The following is a 1147-amino-acid chain: Multiple epidermal growth factor-like domains protein 10 (1147 aa).

Residues 1–25 (MAISSSSCLGLICSLLCHWVGTASS) form the signal peptide. The necessary for interaction with AP2M1, self-assembly and formation of the irregular, mosaic-like adhesion pattern stretch occupies residues 1–857 (MAISSSSCLG…ALPADSYQIG (857 aa)). Residues 26 to 857 (LNLEDPNVCS…ALPADSYQIG (832 aa)) are Extracellular-facing. An EMI domain is found at 30–107 (DPNVCSHWES…FYESRDMCVP (78 aa)). Intrachain disulfides connect C34-C95, C60-C69, C94-C105, C109-C124, C126-C135, C148-C160, C154-C167, C169-C178, C191-C203, C197-C210, C212-C221, C234-C246, C240-C253, C255-C264, C281-C289, C283-C296, C298-C307, C320-C332, C326-C339, C341-C350, C409-C421, C415-C428, C430-C439, C456-C464, C458-C471, C473-C482, C495-C507, C501-C514, C516-C525, C542-C550, C544-C557, C559-C568, C581-C593, C587-C600, C602-C611, C669-C681, C675-C688, C690-C699, C716-C724, C718-C731, C733-C742, C755-C767, C761-C774, C776-C785, C802-C810, C804-C817, and C819-C828. 15 EGF-like domains span residues 101–136 (SRDM…TNCS), 144–179 (WGPH…WRCE), 187–222 (YGND…AFCE), 230–265 (HGPH…TVCG), 278–308 (SQEC…ERCQ), 316–351 (YGVR…ELCE), 405–440 (YGEA…TDCS), 453–483 (SSRC…VDCS), 491–526 (WGFG…AKCE), 539–569 (AERC…VHCD), 577–612 (WGPN…TTCQ), 665–700 (FGKN…SDCS), 713–743 (IHTC…LYCT), 751–786 (YGKD…RHCE), and 799–829 (RQIC…ARCD). N-linked (GlcNAc...) asparagine glycosylation occurs at N134. N-linked (GlcNAc...) asparagine glycosylation occurs at N496. Residues 858–878 (AIAGIVVLVLVVLFLLALFII) form a helical membrane-spanning segment. Residues 879–1147 (YRHKQKRKES…STSSSSSSSE (269 aa)) are Cytoplasmic-facing. The interval 945–1147 (RDRMTIAKSK…STSSSSSSSE (203 aa)) is necessary for formation of large intracellular vacuoles. Position 1030 is a phosphotyrosine (Y1030). The disordered stretch occupies residues 1093 to 1147 (HVTQDPYDLPKNSHIPCHYDLLPVRDSSSSPKREDGGGSNSTSSNSTSSSSSSSE). The segment covering 1132 to 1147 (NSTSSNSTSSSSSSSE) has biased composition (low complexity).

Belongs to the MEGF family. In terms of assembly, homomer. Interacts with GULP1 and ABCA1. Interacts with AP2M1. Does not interact with MEGF11. Binds with high affinity to complement C1q. Interacts (via the cytoplasmic domain) with NOTCH1 (via NICD domain). Ubiquitinated; mono- and polyubiquitinated forms are detected. In terms of processing, phosphorylated on tyrosine residues. Phosphorylation at Tyr-1030 may be important for muscle cell proliferation. Expressed in cerebellum (at protein level). Expressed in kidney, stellate cells of the cerebellum and macrophage cell lines.

It localises to the cell membrane. It is found in the cell projection. Its subcellular location is the phagocytic cup. Functionally, membrane receptor involved in phagocytosis by macrophages and astrocytes of apoptotic cells. Receptor for C1q, an eat-me signal, that binds phosphatidylserine expressed on the surface of apoptotic cells. Cooperates with ABCA1 within the process of engulfment. Promotes the formation of large intracellular vacuoles and may be responsible for the uptake of amyloid-beta peptides. Necessary for astrocyte-dependent apoptotic neuron clearance in the developing cerebellum. Plays a role in muscle cell proliferation, adhesion and motility. Is also an essential factor in the regulation of myogenesis. Controls the balance between skeletal muscle satellite cells proliferation and differentiation through regulation of the notch signaling pathway. May also function in the mosaic spacing of specific neuron subtypes in the retina through homotypic retinal neuron repulsion. Mosaics provide a mechanism to distribute each cell type evenly across the retina, ensuring that all parts of the visual field have access to a full set of processing elements. The chain is Multiple epidermal growth factor-like domains protein 10 from Mus musculus (Mouse).